Here is a 328-residue protein sequence, read N- to C-terminus: BURP domain-containing protein 11 (328 aa).

The 245-residue stretch at 74 to 318 (FFFRDALRPG…TKLSIVWVPR (245 aa)) folds into the BURP domain.

Expressed in roots.

The protein is BURP domain-containing protein 11 (BURP11) of Oryza sativa subsp. japonica (Rice).